The sequence spans 273 residues: uncharacterized protein (273 aa).

Belongs to the AtsA family.

This is an uncharacterized protein from Mycobacterium tuberculosis (strain CDC 1551 / Oshkosh).